The chain runs to 408 residues: Glutamate N-acetyltransferase (408 aa).

Substrate-binding residues include threonine 150, lysine 176, threonine 189, glutamate 271, asparagine 403, and threonine 408. Threonine 189 acts as the Nucleophile in catalysis.

Belongs to the ArgJ family. Heterotetramer of two alpha and two beta chains.

Its subcellular location is the cytoplasm. The catalysed reaction is N(2)-acetyl-L-ornithine + L-glutamate = N-acetyl-L-glutamate + L-ornithine. Its pathway is amino-acid biosynthesis; L-arginine biosynthesis; L-ornithine and N-acetyl-L-glutamate from L-glutamate and N(2)-acetyl-L-ornithine (cyclic): step 1/1. In terms of biological role, catalyzes the transfer of the acetyl group from N(2)-acetylornithine to glutamate, forming N-acetylglutamate and L-ornithine. This is Glutamate N-acetyltransferase from Methanococcus maripaludis (strain C5 / ATCC BAA-1333).